The following is a 134-amino-acid chain: Arsenate reductase (134 aa).

Residues cysteine 11, cysteine 83, and cysteine 90 each act as nucleophile in the active site. Cystine bridges form between cysteine 11–cysteine 83 and cysteine 83–cysteine 90.

It belongs to the low molecular weight phosphotyrosine protein phosphatase family. Thioredoxin-coupled ArsC subfamily.

The protein localises to the cytoplasm. It catalyses the reaction arsenate + [thioredoxin]-dithiol + H(+) = arsenite + [thioredoxin]-disulfide + H2O. Its function is as follows. Catalyzes the reduction of arsenate [As(V)] to arsenite [As(III)]. This is Arsenate reductase from Bacillus cereus (strain G9842).